Consider the following 329-residue polypeptide: Short-chain dehydrogenase/reductase prx4 (329 aa).

Positions Met1 to Cys21 are cleaved as a signal peptide. Ser58, Ile60, and Asn81 together coordinate NADP(+). An N-linked (GlcNAc...) asparagine glycan is attached at Asn91. Residues Asp98, Asn121, Lys161, Tyr194, Lys198, and Thr229 each contribute to the NADP(+) site. The active-site Proton acceptor is the Tyr194. The active-site Lowers pKa of active site Tyr is Lys198. Residues Gly238–Val258 traverse the membrane as a helical segment.

This sequence belongs to the short-chain dehydrogenases/reductases (SDR) family.

It is found in the membrane. Its pathway is sesquiterpene biosynthesis. Short-chain dehydrogenase/reductase; part of the gene cluster that mediates the biosynthesis of PR-toxin, a bicyclic sesquiterpene belonging to the eremophilane class and acting as a mycotoxin. The first step of the pathway is catalyzed by the aristolochene synthase which performs the cyclization of trans,trans-farnesyl diphosphate (FPP) to the bicyclic sesquiterpene aristolochene. Following the formation of aristolochene, the non-oxygenated aristolochene is converted to the trioxygenated intermediate eremofortin B, via 7-epi-neopetasone. This conversion appears to involve three enzymes, a hydroxysterol oxidase-like enzyme, the quinone-oxidase prx3 that forms the quinone-type-structure in the bicyclic nucleus of aristolochene with the C8-oxo group and the C-3 hydroxyl group, and the P450 monooxygenase prx9 that introduces the epoxide at the double bond between carbons 1 and 2. No monoxy or dioxy-intermediates have been reported to be released to the broth, so these three early oxidative reactions may be coupled together. Eremofortin B is further oxidized by another P450 monooxygenase, that introduces a second epoxide between carbons 7 and 11 prior to acetylation to eremofortin A by the acetyltransferase prx11. The second epoxidation may be performed by a second P450 monooxygenase. After the acetylation step, eremofortin A is converted to eremofortin C and then to PR-toxin. First the conversion of eremofortin A to eremofortin C proceeds by oxidation of the side chain of the molecule at C-12 and is catalyzed by the short-chain oxidoreductase prx1. The cytochrome P450 monooxygenase prx8 also plays a role in this step. The primary alcohol formed at C-12 is finally oxidized by the short-chain alcohol dehydrogenase prx4 that forms PR-toxin. The protein is Short-chain dehydrogenase/reductase prx4 of Penicillium rubens (strain ATCC 28089 / DSM 1075 / NRRL 1951 / Wisconsin 54-1255) (Penicillium chrysogenum).